The primary structure comprises 338 residues: Phosphate acyltransferase (338 aa).

This sequence belongs to the PlsX family. In terms of assembly, homodimer. Probably interacts with PlsY.

It is found in the cytoplasm. The catalysed reaction is a fatty acyl-[ACP] + phosphate = an acyl phosphate + holo-[ACP]. It functions in the pathway lipid metabolism; phospholipid metabolism. Its function is as follows. Catalyzes the reversible formation of acyl-phosphate (acyl-PO(4)) from acyl-[acyl-carrier-protein] (acyl-ACP). This enzyme utilizes acyl-ACP as fatty acyl donor, but not acyl-CoA. The protein is Phosphate acyltransferase of Alcanivorax borkumensis (strain ATCC 700651 / DSM 11573 / NCIMB 13689 / SK2).